The following is a 426-amino-acid chain: Deoxyguanosinetriphosphate triphosphohydrolase-like protein (426 aa).

Positions 1-23 (MYPYSESDAQRLHQEAPKASQLA) are disordered. Positions 67–217 (RLTHSLEVAQ…MDFSDDIAYS (151 aa)) constitute an HD domain.

It belongs to the dGTPase family. Type 2 subfamily.

The polypeptide is Deoxyguanosinetriphosphate triphosphohydrolase-like protein (Corynebacterium efficiens (strain DSM 44549 / YS-314 / AJ 12310 / JCM 11189 / NBRC 100395)).